The following is a 152-amino-acid chain: Cell division protein SepF (152 aa).

Positions 25-54 (EEREPVQEEKGTKDKAAFQERPQTGKQNVV) are disordered. A compositionally biased stretch (basic and acidic residues) spans 28-42 (EPVQEEKGTKDKAAF).

It belongs to the SepF family. As to quaternary structure, homodimer. Interacts with FtsZ.

Its subcellular location is the cytoplasm. In terms of biological role, cell division protein that is part of the divisome complex and is recruited early to the Z-ring. Probably stimulates Z-ring formation, perhaps through the cross-linking of FtsZ protofilaments. Its function overlaps with FtsA. The chain is Cell division protein SepF from Bacillus pumilus (strain SAFR-032).